We begin with the raw amino-acid sequence, 594 residues long: Probable translation initiation factor IF-2 (594 aa).

Residues I3–L220 enclose the tr-type G domain. The G1 stretch occupies residues G12–T19. G12 to T19 provides a ligand contact to GTP. A G2 region spans residues G37–H41. A G3 region spans residues D76–G79. GTP is bound by residues D76 to H80 and N130 to D133. A G4 region spans residues N130–D133. Residues S198 to I200 are G5.

Belongs to the TRAFAC class translation factor GTPase superfamily. Classic translation factor GTPase family. IF-2 subfamily.

Its function is as follows. Function in general translation initiation by promoting the binding of the formylmethionine-tRNA to ribosomes. Seems to function along with eIF-2. The sequence is that of Probable translation initiation factor IF-2 (infB) from Methanothermobacter thermautotrophicus (strain ATCC 29096 / DSM 1053 / JCM 10044 / NBRC 100330 / Delta H) (Methanobacterium thermoautotrophicum).